The following is a 106-amino-acid chain: Glutaredoxin-1 (106 aa).

Ala1 carries the post-translational modification N-acetylalanine. The 104-residue stretch at 2 to 105 (QEFVNSKIQP…ARLKEMGALR (104 aa)) folds into the Glutaredoxin domain. An N6-succinyllysine modification is found at Lys8. 2 disulfides stabilise this stretch: Cys22–Cys25 and Cys78–Cys82.

This sequence belongs to the glutaredoxin family.

The protein resides in the cytoplasm. In terms of biological role, has a glutathione-disulfide oxidoreductase activity in the presence of NADPH and glutathione reductase. Reduces low molecular weight disulfides and proteins. The sequence is that of Glutaredoxin-1 (GLRX) from Oryctolagus cuniculus (Rabbit).